Reading from the N-terminus, the 445-residue chain is Glutamyl-tRNA(Gln) amidotransferase subunit D (445 aa).

The Asparaginase/glutaminase domain occupies S93 to N425. Active-site residues include T103, T179, D180, and K258.

The protein belongs to the asparaginase 1 family. GatD subfamily. In terms of assembly, heterodimer of GatD and GatE.

The enzyme catalyses L-glutamyl-tRNA(Gln) + L-glutamine + ATP + H2O = L-glutaminyl-tRNA(Gln) + L-glutamate + ADP + phosphate + H(+). In terms of biological role, allows the formation of correctly charged Gln-tRNA(Gln) through the transamidation of misacylated Glu-tRNA(Gln) in organisms which lack glutaminyl-tRNA synthetase. The reaction takes place in the presence of glutamine and ATP through an activated gamma-phospho-Glu-tRNA(Gln). The GatDE system is specific for glutamate and does not act on aspartate. The protein is Glutamyl-tRNA(Gln) amidotransferase subunit D of Saccharolobus islandicus (strain L.S.2.15 / Lassen #1) (Sulfolobus islandicus).